We begin with the raw amino-acid sequence, 84 residues long: Beta-cardiotoxin CTX27 (84 aa).

Positions 1 to 21 (MKTLLLTLVVVTIVCLDLGYT) are cleaved as a signal peptide. Intrachain disulfides connect C24/C43, C36/C61, C65/C76, and C77/C82.

Belongs to the three-finger toxin family. Short-chain subfamily. Aminergic toxin sub-subfamily. In terms of tissue distribution, expressed by the venom gland.

The protein localises to the secreted. Acts as a beta-blocker by binding to beta-1 and beta-2 adrenergic receptors (ADRB1 and ADRB2). It dose-dependently decreases the heart rate (bradycardia), whereas conventional cardiotoxins increases it. At 100 mg/kg, intraperitoneal injection into mice provokes labored breathing, impaired locomotion, lack of response to external stimuli, and death (after 30 minutes). This is Beta-cardiotoxin CTX27 from Ophiophagus hannah (King cobra).